The following is a 424-amino-acid chain: MTNKKAFKEACKFIAGGVNSPVRAFANVQSEPKFISHGKGAYIFDIDGNSYIDYVQSWGPLLFGHCDKDIQKACQKALHKGSSFGAPTLLETELAKLVLSDFPHLEKIRFVSSGTEATMSAIRLARGFTKKDKILKFEGCYHGHSDSLLVSAGSGAATFNSPSSLGVLEDVAKHTLVAKYNDINSVKELFEKNKDIACVIIEPIAGNMGLVPAKQDFLEELAKICKNNQTLLIFDEVMSGYRASYLGSYGINHIQADIITFGKVIGGGLPAAAFASRAEIMDILSPLGGVYQAGTLSGNPLAMAAGIASLTKAKKKTKLYDKLGKLAKKLTQGMKKLADEKGLPLQACHVGSMFGYFFTKDPVSNYQDALKSDLALFSKFHKNMLENGIYLAPSQFETGFICSKMDDKIIDTTLEAVRESFKRI.

The residue at position 263 (lysine 263) is an N6-(pyridoxal phosphate)lysine.

It belongs to the class-III pyridoxal-phosphate-dependent aminotransferase family. HemL subfamily. Homodimer. Pyridoxal 5'-phosphate is required as a cofactor.

The protein resides in the cytoplasm. The catalysed reaction is (S)-4-amino-5-oxopentanoate = 5-aminolevulinate. It functions in the pathway porphyrin-containing compound metabolism; protoporphyrin-IX biosynthesis; 5-aminolevulinate from L-glutamyl-tRNA(Glu): step 2/2. The sequence is that of Glutamate-1-semialdehyde 2,1-aminomutase from Campylobacter jejuni subsp. jejuni serotype O:6 (strain 81116 / NCTC 11828).